Reading from the N-terminus, the 314-residue chain is MIIITGPTAVGKTDLSIAICCKLNAEIVSIDSRQLYRYMDIGTGKPTLSQRKIVRHHLIDIVDPDEYYSVYQFRLDAIRAIQDIVKRGKIPLFAGGTGLYIDSLVRGIFEGVSRDEELRKQLLQKETQCPGVLRSMLERIDPELADRIHKNDLKRTVRALEIWIKSKEKPSELRKKVKPVGRFTVIILHRDREELYDRINLRVNEMFQAGLLDEVKDLMKRGYSKNLNALRTIGYQESIAHLEGKLNFESTVELVKKNTRHFARRQVIWFRRYKDAIVIDLSSSSYRDAVNTISRIVLQDFQHDSFYDGGFSYD.

Residue 6 to 13 (GPTAVGKT) participates in ATP binding. 8 to 13 (TAVGKT) is a substrate binding site. The tract at residues 31 to 34 (DSRQ) is interaction with substrate tRNA.

It belongs to the IPP transferase family. As to quaternary structure, monomer. Mg(2+) serves as cofactor.

It catalyses the reaction adenosine(37) in tRNA + dimethylallyl diphosphate = N(6)-dimethylallyladenosine(37) in tRNA + diphosphate. Functionally, catalyzes the transfer of a dimethylallyl group onto the adenine at position 37 in tRNAs that read codons beginning with uridine, leading to the formation of N6-(dimethylallyl)adenosine (i(6)A). In Pseudothermotoga lettingae (strain ATCC BAA-301 / DSM 14385 / NBRC 107922 / TMO) (Thermotoga lettingae), this protein is tRNA dimethylallyltransferase.